The sequence spans 224 residues: MAASRWLRAVLLFLCASDLLLLPPPNAYAADTPGEATPPPRKKKDIRDYNDADMARLLEQWEKDDDIEEGDLPEHKRPSAPIDFSKLDPGKPESILKMTKKGKTLMMFVTVSGNPTEKETEEITSLWQGSLFNANYDVQRFIVGSDRAIFMLRDGSYAWEIKDFLVSQDRCAEVTLEGQMYPGKGGGSKEKNKTKPEKAKKKEGDPKPRASKEDNRAGSRREDL.

An N-terminal signal peptide occupies residues 1–29 (MAASRWLRAVLLFLCASDLLLLPPPNAYA). Residues 1–155 (MAASRWLRAV…DRAIFMLRDG (155 aa)) are chaperone domain. Disordered stretches follow at residues 28–49 (YAAD…IRDY) and 178–224 (GQMY…REDL). The segment at 156–195 (SYAWEIKDFLVSQDRCAEVTLEGQMYPGKGGGSKEKNKTK) is escort domain. Positions 187–224 (GSKEKNKTKPEKAKKKEGDPKPRASKEDNRAGSRREDL) are enriched in basic and acidic residues. A glycan (N-linked (GlcNAc...) asparagine) is linked at Asn-192. The Prevents secretion from ER signature appears at 221-224 (REDL).

It belongs to the MESD family. Monomer. Interacts with LRP5; the interaction prevents LRP5 from forming aggregates and chaperones LRP6 to the plasma membrane. Interacts with LRP6; the interaction prevents LRP6 from forming aggregates and chaperones LRP6 to the plasma membrane. Interacts with LRP4; the interaction promotes glycosylation of LRP4 and its cell-surface expression. In terms of tissue distribution, expressed in many tissues, but not in skeletal muscles. In the retina expressed in retinal ganglion cells, inner and outer plexiform layers, photoreceptor inner and outer segments and retinal pigment epithelium (at protein level).

The protein resides in the endoplasmic reticulum. In terms of biological role, chaperone specifically assisting the folding of beta-propeller/EGF modules within the family of low-density lipoprotein receptors (LDLRs). Acts as a modulator of the Wnt pathway through chaperoning the coreceptors of the canonical Wnt pathway, LRP5 and LRP6, to the plasma membrane. Essential for specification of embryonic polarity and mesoderm induction. Plays an essential role in neuromuscular junction (NMJ) formation by promoting cell-surface expression of LRP4. May regulate phagocytosis of apoptotic retinal pigment epithelium (RPE) cells. In Mus musculus (Mouse), this protein is LRP chaperone MESD.